Consider the following 431-residue polypeptide: Enolase (431 aa).

Glutamine 167 provides a ligand contact to (2R)-2-phosphoglycerate. Glutamate 209 acts as the Proton donor in catalysis. 3 residues coordinate Mg(2+): aspartate 246, glutamate 287, and aspartate 314. 4 residues coordinate (2R)-2-phosphoglycerate: lysine 339, arginine 368, serine 369, and lysine 390. The active-site Proton acceptor is the lysine 339.

The protein belongs to the enolase family. Mg(2+) serves as cofactor.

The protein resides in the cytoplasm. It is found in the secreted. It localises to the cell surface. The enzyme catalyses (2R)-2-phosphoglycerate = phosphoenolpyruvate + H2O. It participates in carbohydrate degradation; glycolysis; pyruvate from D-glyceraldehyde 3-phosphate: step 4/5. Catalyzes the reversible conversion of 2-phosphoglycerate (2-PG) into phosphoenolpyruvate (PEP). It is essential for the degradation of carbohydrates via glycolysis. This Prochlorococcus marinus (strain MIT 9303) protein is Enolase.